The primary structure comprises 777 residues: Serine/threonine-protein kinase PLK4 (777 aa).

Positions 14 to 268 (YEVQHLLGKG…LEQVLRHPFL (255 aa)) constitute a Protein kinase domain. Residues 20-28 (LGKGGFASV) and K43 contribute to the ATP site. The active-site Proton acceptor is the D139. Residues 371-381 (TNNLAPFTSDS) are compositionally biased toward polar residues. The interval 371-390 (TNNLAPFTSDSDMIPSPVGE) is disordered. Positions 390–507 (EKRLLMPPLE…ARFVGLVKSK (118 aa)) constitute a Cryptic POLO box 1 (CPB1) domain. The region spanning 508–611 (TPKITFFSSL…GRRPAADMHA (104 aa)) is the Cryptic POLO box 2 (CPB2) domain. The POLO box domain maps to 669 to 748 (PIKRITVPEI…MPQLQMKLKC (80 aa)).

Belongs to the protein kinase superfamily. Ser/Thr protein kinase family. CDC5/Polo subfamily. Homodimer. Post-translationally, ubiquitinated by the SCF(Slimb) ubiquitin ligase complex; leading to its degradation by the proteasome during interphase and regulating centriole number and ensuring the block to centriole reduplication.

Its subcellular location is the cytoplasm. The protein localises to the cytoskeleton. It is found in the microtubule organizing center. It localises to the centrosome. The protein resides in the centriole. The catalysed reaction is L-seryl-[protein] + ATP = O-phospho-L-seryl-[protein] + ADP + H(+). The enzyme catalyses L-threonyl-[protein] + ATP = O-phospho-L-threonyl-[protein] + ADP + H(+). Serine/threonine-protein kinase that plays a central role in centriole duplication. Able to trigger procentriole formation on the surface of the mother centriole cylinder, using mother centriole as a platform, leading to the recruitment of centriole biogenesis proteins such as sas-6. When overexpressed, it is able to induce centrosome amplification through the simultaneous generation of multiple procentrioles adjoining each parental centriole during S phase. Centrosome amplification following overexpression can initiate tumorigenesis, highlighting the importance of centrosome regulation in cancers. This is Serine/threonine-protein kinase PLK4 (SAK) from Drosophila persimilis (Fruit fly).